The primary structure comprises 87 residues: Small ribosomal subunit protein bS20 (87 aa).

The disordered stretch occupies residues methionine 1–methionine 27.

This sequence belongs to the bacterial ribosomal protein bS20 family.

Its function is as follows. Binds directly to 16S ribosomal RNA. This is Small ribosomal subunit protein bS20 from Erwinia tasmaniensis (strain DSM 17950 / CFBP 7177 / CIP 109463 / NCPPB 4357 / Et1/99).